The following is a 438-amino-acid chain: Protein DAY-LENGTH-DEPENDENT DELAYED-GREENING 1, chloroplastic (438 aa).

The N-terminal 54 residues, 1-54 (MSLMSSSMVLCHCLSFSSQNPDPESSSSSLLRYKPCDSISLWGKRRKKLWRFVP), are a transit peptide targeting the chloroplast. Helical transmembrane passes span 216–236 (FLAV…DYLL), 314–334 (AFAN…LLYA), 359–379 (AFLI…SGWE), and 398–418 (ITIF…LWLF).

This sequence belongs to the CemA family.

The protein resides in the plastid. It is found in the chloroplast envelope. Its subcellular location is the chloroplast membrane. The catalysed reaction is K(+)(in) + H(+)(out) = K(+)(out) + H(+)(in). It catalyses the reaction Ca(2+)(in) + H(+)(out) = Ca(2+)(out) + H(+)(in). Promotes K(+)/H(+) antiport activity supporting K(+) efflux to control H(+) homeostasis in chloroplasts. Also able to ensure Ca(2+)/H(+) antiport activity in vitro. Essential for chloroplast pH regulation and optimization of non-photochemical quenching (NPQ), a regulatory mechanism that dissipates excess light energy; acts downstream of PSBS but independently from PGR5 and FLAP1. This chain is Protein DAY-LENGTH-DEPENDENT DELAYED-GREENING 1, chloroplastic, found in Arabidopsis thaliana (Mouse-ear cress).